A 514-amino-acid chain; its full sequence is Lysine--tRNA ligase (514 aa).

Glu422 and Glu429 together coordinate Mg(2+).

This sequence belongs to the class-II aminoacyl-tRNA synthetase family. As to quaternary structure, homodimer. The cofactor is Mg(2+).

It is found in the cytoplasm. It catalyses the reaction tRNA(Lys) + L-lysine + ATP = L-lysyl-tRNA(Lys) + AMP + diphosphate. The polypeptide is Lysine--tRNA ligase (Psychrobacter arcticus (strain DSM 17307 / VKM B-2377 / 273-4)).